A 221-amino-acid polypeptide reads, in one-letter code: Uridylate kinase (221 aa).

7–11 provides a ligand contact to ATP; sequence KISGK. Gly43 is a UMP binding site. Residues Gly44 and Arg48 each coordinate ATP. UMP-binding positions include Asp62 and 109-115; that span reads LQPGQST. Positions 135 and 141 each coordinate ATP.

This sequence belongs to the UMP kinase family. In terms of assembly, homohexamer.

The protein resides in the cytoplasm. The enzyme catalyses UMP + ATP = UDP + ADP. The protein operates within pyrimidine metabolism; CTP biosynthesis via de novo pathway; UDP from UMP (UMPK route): step 1/1. Inhibited by UTP. Its function is as follows. Catalyzes the reversible phosphorylation of UMP to UDP. This Ignicoccus hospitalis (strain KIN4/I / DSM 18386 / JCM 14125) protein is Uridylate kinase.